The chain runs to 277 residues: Thymidylate synthase (277 aa).

DUMP is bound at residue arginine 21. Histidine 51 lines the (6R)-5,10-methylene-5,6,7,8-tetrahydrofolate pocket. A dUMP-binding site is contributed by 126–127 (RR). Cysteine 159 (nucleophile) is an active-site residue. DUMP is bound by residues 179-182 (RSAD), asparagine 190, and 220-222 (HLY). Aspartate 182 is a binding site for (6R)-5,10-methylene-5,6,7,8-tetrahydrofolate. Serine 276 contacts (6R)-5,10-methylene-5,6,7,8-tetrahydrofolate.

It belongs to the thymidylate synthase family. Bacterial-type ThyA subfamily. Homodimer.

Its subcellular location is the cytoplasm. It catalyses the reaction dUMP + (6R)-5,10-methylene-5,6,7,8-tetrahydrofolate = 7,8-dihydrofolate + dTMP. It participates in pyrimidine metabolism; dTTP biosynthesis. Its function is as follows. Catalyzes the reductive methylation of 2'-deoxyuridine-5'-monophosphate (dUMP) to 2'-deoxythymidine-5'-monophosphate (dTMP) while utilizing 5,10-methylenetetrahydrofolate (mTHF) as the methyl donor and reductant in the reaction, yielding dihydrofolate (DHF) as a by-product. This enzymatic reaction provides an intracellular de novo source of dTMP, an essential precursor for DNA biosynthesis. This is Thymidylate synthase from Teredinibacter turnerae (strain ATCC 39867 / T7901).